Reading from the N-terminus, the 277-residue chain is Phosphonates import ATP-binding protein PhnC (277 aa).

The ABC transporter domain maps to 3 to 251; that stretch reads IKLDKVSARH…RLQALYAQHL (249 aa). Position 40 to 47 (40 to 47) interacts with ATP; that stretch reads GPSGAGKT.

The protein belongs to the ABC transporter superfamily. Phosphonates importer (TC 3.A.1.9.1) family. As to quaternary structure, the complex is composed of two ATP-binding proteins (PhnC), two transmembrane proteins (PhnE) and a solute-binding protein (PhnD).

It localises to the cell inner membrane. It carries out the reaction phosphonate(out) + ATP + H2O = phosphonate(in) + ADP + phosphate + H(+). Part of the ABC transporter complex PhnCDE involved in phosphonates import. Responsible for energy coupling to the transport system. This chain is Phosphonates import ATP-binding protein PhnC, found in Polaromonas sp. (strain JS666 / ATCC BAA-500).